Here is a 49-residue protein sequence, read N- to C-terminus: SPbeta prophage-derived uncharacterized protein YorN (49 aa).

This chain is SPbeta prophage-derived uncharacterized protein YorN (yorN), found in Bacillus subtilis (strain 168).